The following is a 670-amino-acid chain: G-protein coupled receptor moody (670 aa).

Residues 1–40 (MSDETTISLEDGYPPLEALTTMVPPADATGFSQSLLTFAA) lie on the Extracellular side of the membrane. The chain crosses the membrane as a helical span at residues 41 to 61 (VMTFLIMIVGICGNLLTVVAL). Topologically, residues 62–69 (LKCPKVRN) are cytoplasmic. The helical transmembrane segment at 70–90 (VAAAFIISLCIADLLFCALVL) threads the bilayer. Residues 91 to 111 (PFQGLRFVQGTWRHGQVLCRL) lie on the Extracellular side of the membrane. Cysteine 109 and cysteine 188 are joined by a disulfide. Residues 112-132 (IPFIQYGNIGVSLLCIAMITI) form a helical membrane-spanning segment. At 133-152 (NRYVMITHHGLYARIYKRHW) the chain is on the cytoplasmic side. The chain crosses the membrane as a helical span at residues 153–173 (IAVMIAACWLFSYGMQLPTLL). The Extracellular segment spans residues 174–202 (GEWGRFGYDSRLQTCSIMTDDHGHSSKTT). Residues 203–223 (LFITAFVIPCLVIIACYAKIF) form a helical membrane-spanning segment. The Cytoplasmic portion of the chain corresponds to 224 to 313 (WVVHKSEQRL…AKRNEWRITK (90 aa)). Residues 258–302 (LPSGAECQPSNRVSSDSSSSFSIDVPETAPSGKQQPTRVKDQREV) are disordered. Residues 267–279 (SNRVSSDSSSSFS) are compositionally biased toward low complexity. The helical transmembrane segment at 314 to 334 (MVLAIFLSFVVCYLPITIVKV) threads the bilayer. The Extracellular portion of the chain corresponds to 335–345 (ADKNVEHPSLH). The chain crosses the membrane as a helical span at residues 346-366 (ICSYILLYLSACINPIIYVIM). At 367-670 (NKQYRKAYKT…LTAKMKFPKD (304 aa)) the chain is on the cytoplasmic side. Disordered regions lie at residues 461 to 490 (DLIS…GSNS), 562 to 622 (ELPP…YMNV), and 636 to 670 (TNAV…FPKD). The span at 564–584 (PPTPPATSAPTTPAPPPPSSP) shows a compositional bias: pro residues. The segment covering 585-598 (LHPLSTDSSTTTIS) has biased composition (low complexity). Over residues 646–660 (GPANTSATVSISGSK) the composition is skewed to polar residues.

Belongs to the G-protein coupled receptor 1 family. As to expression, isoform A and isoform B are expressed in the head. Isoform B only is expressed in the body. Expressed in embryonic glial cells that are involved in ensheathment and insulation of the nervous system. Both isoforms are expressed in glia that insulate the larval and adult nervous system. Also expressed in the germ cells, the gut, and the heart.

It is found in the cell membrane. Functionally, isoform A and isoform B are required in glia to regulate the acute sensitivity to cocaine and to continuously maintain the proper blood-brain barrier (BBB) function. A moody-mediated signaling pathway functions in glia to regulate nervous system insulation and drug-related behaviors. Galphai and Galphao, and the regulator of G protein signaling, loco, are required in the surface glia to achieve effective insulation. The components function by regulating the cortical actin and thereby stabilizing the extended morphology of the surface glia, which in turn is necessary for the formation of septate junctions of sufficient length to achieve proper sealing of the nerve cord. This Drosophila melanogaster (Fruit fly) protein is G-protein coupled receptor moody.